The sequence spans 85 residues: Depressant insect toxin BmK ITa1 (85 aa).

A signal peptide spans 1-21; the sequence is MKLFLLLLISASMLIDGLVNA. The 61-residue stretch at 22-82 folds into the LCN-type CS-alpha/beta domain; that stretch reads DGYIRGSNGC…TWKSESNTCG (61 aa). Disulfide bonds link Cys-31/Cys-81, Cys-35/Cys-56, Cys-42/Cys-63, and Cys-46/Cys-65. At Gly-82 the chain carries Glycine amide.

This sequence belongs to the long (4 C-C) scorpion toxin superfamily. Sodium channel inhibitor family. Beta subfamily. In terms of tissue distribution, expressed by the venom gland.

It localises to the secreted. Depressant insect toxins cause a transient contraction paralysis followed by a slow flaccid paralysis. They bind voltage-independently to sodium channels (Nav) and block action potentials, primarily by depolarizing the axonal membrane and suppressing the sodium current. This chain is Depressant insect toxin BmK ITa1, found in Olivierus martensii (Manchurian scorpion).